The primary structure comprises 86 residues: MELSADYLREKLRQDLEAEHVEVEDTTLNRCATSFRVLVVSAKFEGKPLLQRHRLVNECLAEELPHIHAFEQKTLTPEQWTRQRRE.

M1 bears the N-acetylmethionine mark.

The protein belongs to the BolA/IbaG family. As to quaternary structure, interacts with GLRX3; forms a heterotrimeric complex composed by two BOLA2 molecules and one GLRX3 molecule; linked by [2Fe-2S] clusters.

The protein resides in the cytoplasm. The protein localises to the nucleus. Acts as a cytosolic iron-sulfur (Fe-S) cluster assembly factor that facilitates [2Fe-2S] cluster insertion into a subset of cytosolic proteins. Acts together with the monothiol glutaredoxin GLRX3. This chain is BolA-like protein 2 (Bola2), found in Mus musculus (Mouse).